The following is a 325-amino-acid chain: uncharacterized protein (325 aa).

The segment at 108 to 141 (PHRTQGISSTSSKSSKGGKKTPVRSTPKEIKKAT) is disordered.

This is an uncharacterized protein from Homo sapiens (Human).